Here is a 518-residue protein sequence, read N- to C-terminus: Cytochrome P450 monooxygenase atnE (518 aa).

Residues 11–31 (FLAAFAVWMGVVVLAFAIFCV) traverse the membrane as a helical segment. N-linked (GlcNAc...) asparagine glycosylation occurs at Asn184. Heme is bound at residue Cys458.

This sequence belongs to the cytochrome P450 family. The cofactor is heme.

It localises to the membrane. Its pathway is secondary metabolite biosynthesis. In terms of biological role, cytochrome P450 monooxygenase; part of the gene cluster that mediates the biosynthesis of aspercryptins, linear lipopeptides built from six amino acids including 2 highly unusual and nonproteogenic amino acids, 2-amino-octanoic acid (2aoa) and 2-amino-dodecanol (2adol). The core structure of aspercryptins is as follows: Ser/Ala-Thr-Ile/Val-2aoa-Asn-2adol. The first step of aspercryptin biosynthesis is the generation of the fatty acid precursors, octanoic and dodecanoic acids, by the FAS subunits atnF and atnM. The fatty acid precursors are likely transformed into the corresponding alpha-amino fatty acids in three steps. First, they are hydroxylated by the cytochrome P450 monooxygenase atnE, then oxidized to the corresponding alpha-keto acids by the NAD(P)-dependent oxidoreductase atnD, and finally converted to the alpha-amino fatty acids by the PLP-dependent aminotransferases atnH or atnJ. the alpha-amino fatty acids, 2-amino-octanoic and 2-amino-dodecanoic acids, are recognized, activated, and covalently tethered to the NRPS atnA by its fourth and sixth adenylation domains. The second module of atnA is the Thr module and contains an epimerase (E) domain responsible for the epimerization of Thr to D-allo-Thr. Additionally, despite atnA having only one epimerase domain, the first amino acid of aspercryptin A1 is D-Ser, suggesting that serine is either loaded directly as D-Ser on the first module or that the epimerase domain in the threonine module epimerizes both L-Ser and L-Thr. After condensation of the hexapeptide of aspercryptin, the C-terminal reductase (TE) domain might be involved in the reductive release and production of the aldehyde hexapeptide. Further reduction would generate aspercryptins. The variety of aspercryptins produced reflects the flexibility of the atnA NRPS, allowing incorporation of alanine instead of serine, valine for isoleucine, and a C10 fatty amino alcohol instead of the C12 version. AtnB seems to be involved in the selectivity for Ile versus Val by the third module. Moreover, type B, C and D aspercryptins have an additional N-terminal cichorine, acetyl and propionyl group respectively. In Emericella nidulans (strain FGSC A4 / ATCC 38163 / CBS 112.46 / NRRL 194 / M139) (Aspergillus nidulans), this protein is Cytochrome P450 monooxygenase atnE.